The primary structure comprises 338 residues: Histidinol-phosphate aminotransferase (338 aa).

K204 is modified (N6-(pyridoxal phosphate)lysine).

The protein belongs to the class-II pyridoxal-phosphate-dependent aminotransferase family. Histidinol-phosphate aminotransferase subfamily. Pyridoxal 5'-phosphate serves as cofactor.

The enzyme catalyses L-histidinol phosphate + 2-oxoglutarate = 3-(imidazol-4-yl)-2-oxopropyl phosphate + L-glutamate. Its pathway is amino-acid biosynthesis; L-histidine biosynthesis; L-histidine from 5-phospho-alpha-D-ribose 1-diphosphate: step 7/9. The sequence is that of Histidinol-phosphate aminotransferase from Pyrococcus furiosus (strain ATCC 43587 / DSM 3638 / JCM 8422 / Vc1).